The primary structure comprises 235 residues: Small ribosomal subunit protein uS2c (235 aa).

The protein belongs to the universal ribosomal protein uS2 family.

It localises to the plastid. The protein localises to the chloroplast. The chain is Small ribosomal subunit protein uS2c (rps2) from Anthoceros angustus (Hornwort).